We begin with the raw amino-acid sequence, 378 residues long: MSTPRIVVGVSGGVDSSVAAWKLAQQGEPIAGLFMQNWADDGSGDCRAEDDRRDAVAVCGVLGIPFHFRDFSGEYWSDVFEHFLAEYAAGRTPNPDVLCNREVKFKHFLDAAQALGAERIATGHYAQVAHRGGRWRLLRGADRGKDQSYFLHQLGQTQLAATLFPIGDLEKSTLRRIAQDAGLPTHAKKDSTGICFIGERDFREFLGRYLPARTGEIRDPQGQRIAEHPGVFYFTLGQREGLNIGGVRGRAAAPWYVVGKDVANNVLYVDQDRDSPLLQSRWLQSEQAHWVTGAPPARRFSCTAQTRYRQPDESCTVDVQDDGSVQVRFERPQRAVTPGQSLVLYDGEECLGGAVIAATDAPLERQLAGSSFSSEVVA.

ATP is bound by residues 9 to 16 (GVSGGVDS) and Met-35. An interaction with target base in tRNA region spans residues 94 to 96 (NPD). Cys-99 acts as the Nucleophile in catalysis. The cysteines at positions 99 and 195 are disulfide-linked. Gly-123 serves as a coordination point for ATP. The tract at residues 145–147 (KDQ) is interaction with tRNA. Catalysis depends on Cys-195, which acts as the Cysteine persulfide intermediate. An interaction with tRNA region spans residues 307–308 (RY).

Belongs to the MnmA/TRMU family.

Its subcellular location is the cytoplasm. It carries out the reaction S-sulfanyl-L-cysteinyl-[protein] + uridine(34) in tRNA + AH2 + ATP = 2-thiouridine(34) in tRNA + L-cysteinyl-[protein] + A + AMP + diphosphate + H(+). Its function is as follows. Catalyzes the 2-thiolation of uridine at the wobble position (U34) of tRNA, leading to the formation of s(2)U34. In Xanthomonas axonopodis pv. citri (strain 306), this protein is tRNA-specific 2-thiouridylase MnmA.